The primary structure comprises 418 residues: Protein fuzzy homolog (418 aa).

This sequence belongs to the fuzzy family. As to quaternary structure, interacts with rsg1. Interacts with intu and wdpcp; fuz, intu and wdpcp probably form the core CPLANE (ciliogenesis and planar polarity effectors) complex.

It is found in the cytoplasm. The protein localises to the cytoskeleton. It localises to the cilium basal body. In terms of biological role, probable planar cell polarity effector involved in cilium biogenesis. Proposed to function as core component of the CPLANE (ciliogenesis and planar polarity effectors) complex involved in the recruitment of peripheral IFT-A proteins to basal bodies. May regulate protein and membrane transport to the cilium. May control the organization of the apical actin cytoskeleton, which is essential for the normal orientation of elongating ciliary microtubules. In Xenopus tropicalis (Western clawed frog), this protein is Protein fuzzy homolog (fuz).